A 173-amino-acid polypeptide reads, in one-letter code: MKTAHLVVVVCFLAGALQTAVALKEEDCEVCVKTVRRFADSLDDTTKKDYRKIETSFKKFCSGQKNKEHRFCYYLGGLEESATGILNELSKPLSWSMPAEKICEKLKKKDAQICDLRYEKQIDLNSVDLKKLKVRDLKKILNDWDESCDGCLEKSDFIKRIEELKPKYAHGEL.

A signal peptide spans 1–22 (MKTAHLVVVVCFLAGALQTAVA). 4 disulfides stabilise this stretch: C28–C114, C31–C103, C61–C72, and C148–C151.

Belongs to the ARMET family.

The protein resides in the secreted. Required during the maturation of the embryonic nervous system for maintenance of neuronal and cuticular connectivity. Essential for maintenance of dopaminergic neurons and dopamine levels. This Drosophila ananassae (Fruit fly) protein is Mesencephalic astrocyte-derived neurotrophic factor homolog.